The following is a 220-amino-acid chain: 1-Cys peroxiredoxin B (220 aa).

Residues 4–165 (LTLGDVVPDL…VLRATDALLT (162 aa)) form the Thioredoxin domain. The active-site Cysteine sulfenic acid (-SOH) intermediate is cysteine 46. The Bipartite nuclear localization signal motif lies at 195 to 218 (KARFPAGFETAQLPSNKCYLRFTQ).

The protein belongs to the peroxiredoxin family. Prx6 subfamily.

The protein resides in the nucleus. It localises to the cytoplasm. The enzyme catalyses a hydroperoxide + [thioredoxin]-dithiol = an alcohol + [thioredoxin]-disulfide + H2O. Thiol-specific peroxidase that catalyzes the reduction of hydrogen peroxide and organic hydroperoxides to water and alcohols, respectively. Seems to contribute to the inhibition of germination during stress. This is 1-Cys peroxiredoxin B from Oryza sativa subsp. japonica (Rice).